Reading from the N-terminus, the 2026-residue chain is Fatty acid synthase subunit beta (2026 aa).

The interval 148 to 526 (ILMAFGGQGS…VDGRGVRIIA (379 aa)) is acetyltransferase (AT) domain. The For acetyltransferase activity role is filled by Ser-268. The segment at 579–824 (SQLLQAPPII…LILAAAGVAD (246 aa)) is enoyl reductase (ER) domain. Positions 1130 to 1604 (SQVTGSVRSA…LPGDQLTVRI (475 aa)) are dehydratase (DH) domain. A MaoC-like domain is found at 1512–1625 (PGLIDNGSRT…LSVAAYREGT (114 aa)). The malonyl/palmitoyl transferase (MT/PT) domain stretch occupies residues 1643 to 2016 (YLFTGQGSQA…LEEAAAVTGS (374 aa)). The active-site For malonyltransferase activity is the Ser-1788.

The protein belongs to the fungal fatty acid synthetase subunit beta family. As to quaternary structure, [Alpha(6)beta(6)] hexamers of two multifunctional subunits (alpha and beta).

The catalysed reaction is acetyl-CoA + n malonyl-CoA + 2n NADPH + 4n H(+) = a long-chain-acyl-CoA + n CoA + n CO2 + 2n NADP(+).. It carries out the reaction holo-[ACP] + acetyl-CoA = acetyl-[ACP] + CoA. The enzyme catalyses holo-[ACP] + malonyl-CoA = malonyl-[ACP] + CoA. It catalyses the reaction a (3R)-hydroxyacyl-[ACP] = a (2E)-enoyl-[ACP] + H2O. The catalysed reaction is a 2,3-saturated acyl-[ACP] + NAD(+) = a (2E)-enoyl-[ACP] + NADH + H(+). It carries out the reaction (9Z)-octadecenoyl-[ACP] + H2O = (9Z)-octadecenoate + holo-[ACP] + H(+). The protein operates within secondary metabolite biosynthesis. In terms of biological role, fatty acid synthase beta subunit; part of the gene cluster that mediates the biosynthesis of oryzines, natural products with an unusual maleidride backbone. The two subunits of the fungal fatty acid synthase oryfasA and oryfasB probably form octenoic acid. This fatty acid is most likely activated by the acyl-CoA ligase oryP to give octenyl-CoA before the citrate synthase-like protein oryE catalyzes condensation with oxaloacetate to form tricarboxylic acid. The next steps of the pathways are conjectural, but a favorite possible route has been proposed, beginning with decarboxylation and concomitant dehydration by the decarboxylase oryM, followed by tautomerization, which may lead to the production of a diene intermediate. Reduction of this diene intermediate could give the known metabolite piliformic acid. On the pathway to oryzine B and oryzine A, however, hydroxylation of the diene by the alpha-ketoglutarate-dependent dioxygenase oryG and lactonisation by the lactonohydrolases oryH or oryL could give oryzine B directly. Finally, enoyl reduction by the dehydrogenase oryD would then convert oryzine B into oryzine A. This chain is Fatty acid synthase subunit beta, found in Aspergillus oryzae (strain ATCC 42149 / RIB 40) (Yellow koji mold).